We begin with the raw amino-acid sequence, 200 residues long: Ribonuclease HII (200 aa).

Residues 14–200 form the RNase H type-2 domain; that stretch reads SRLAGVDEVG…FAPVKQWQLL (187 aa). A divalent metal cation-binding residues include Asp-20, Glu-21, and Asp-112.

It belongs to the RNase HII family. It depends on Mn(2+) as a cofactor. The cofactor is Mg(2+).

The protein localises to the cytoplasm. The catalysed reaction is Endonucleolytic cleavage to 5'-phosphomonoester.. Endonuclease that specifically degrades the RNA of RNA-DNA hybrids. This chain is Ribonuclease HII, found in Chromohalobacter salexigens (strain ATCC BAA-138 / DSM 3043 / CIP 106854 / NCIMB 13768 / 1H11).